A 432-amino-acid polypeptide reads, in one-letter code: MGDLILDPYMEDAILDHSCLAELLADQTALPLFHPYSGGATPQMVDTDTFLRAIGALPPLAPPPAAPLAPAPPDSPRTPHTYGSLLPVYGDLPPLSGAVLQEPLPLPEGSDHPVSPKKTIEVASLLQERADQPVVTSNSATTTRPQLCAPYDDDIEATLRAMETNPVERPSPYFLETTQGGRMTALLRLVAATTVFLAAKYEDQYTLRKIDASMVAARCGYTSETRHKMVSCMETEILAALDYNLGGPTAYTFVEHFTRYYGKGKEEKLMREAAHWFADGSLLTYGFHRYLPSMVAASAIFLARLHVRGHEPWRKDLAELTGFWYSDVSTYGPTADTFVEHFTRYKCTTAGERKSYGCMQRLERDVADQSLMNYVRLPGATIPAVHGGGGRRASISVARCSLNRHDALVWSTELQELTGYSFEDLVSCIFAM.

The protein belongs to the cyclin family. Cyclin F subfamily.

This Oryza sativa subsp. japonica (Rice) protein is Putative cyclin-F1-4 (CycF1-4).